A 29-amino-acid polypeptide reads, in one-letter code: uncharacterized protein (29 aa).

The protein localises to the plastid. It localises to the chloroplast. This is an uncharacterized protein from Trieres chinensis (Marine centric diatom).